A 261-amino-acid polypeptide reads, in one-letter code: Homeobox-leucine zipper protein HOX24 (261 aa).

Disordered stretches follow at residues 42 to 67 and 160 to 188; these read AAAAGRGGGDGDGGGGGGGGGERKRR and KLNERQDQSGSCDGGGAEGDDDDKRNSVM. Positions 46 to 61 are enriched in gly residues; sequence GRGGGDGDGGGGGGGG. A DNA-binding region (homeobox) is located at residues 61 to 121; it reads GGERKRRFTE…NKRARWRSKQ (61 aa). Residues 120 to 164 form a leucine-zipper region; sequence KQIEHDYAALRAQYDALHARVESLRQEKLALADQVDELRGKLNER.

Belongs to the HD-ZIP homeobox family. Class I subfamily. As to expression, expressed in roots and panicles.

It is found in the nucleus. Its function is as follows. Probable transcription factor. In Oryza sativa subsp. japonica (Rice), this protein is Homeobox-leucine zipper protein HOX24 (HOX24).